The sequence spans 422 residues: Cell division protein DivIB (422 aa).

Basic and acidic residues-rich tracts occupy residues 1 to 23 (MVDWDKEAQRFRQRRQEAEKQEE) and 62 to 75 (EEAKGEDFAKDQEQ). Residues 1-77 (MVDWDKEAQR…DFAKDQEQKH (77 aa)) form a disordered region. Topologically, residues 1-109 (MVDWDKEAQR…LQLKSVSWSR (109 aa)) are cytoplasmic. A helical membrane pass occupies residues 110-130 (LILAAAFLFMIIFSAFWLSPL). The 72-residue stretch at 131–202 (NRIATIEVSG…RTVEVNVQEF (72 aa)) folds into the POTRA domain. Topologically, residues 131-422 (NRIATIEVSG…TVTQTRSSNS (292 aa)) are extracellular. The interval 329–422 (NPLNDPFASP…TVTQTRSSNS (94 aa)) is disordered. Basic and acidic residues predominate over residues 338 to 379 (PEEKASYQEKVDQAKEKSKEKQAKADKHSSESKLGDKPKPRG). Over residues 389 to 422 (TSSQRQTSSQSSPRPGTNSSQQSSTVTQTRSSNS) the composition is skewed to low complexity.

It belongs to the FtsQ/DivIB family. DivIB subfamily.

The protein localises to the cell membrane. In terms of biological role, cell division protein that may be involved in stabilizing or promoting the assembly of the division complex. This is Cell division protein DivIB from Aerococcus urinae (strain CCUG 59500 / ACS-120-V-Col10a).